Reading from the N-terminus, the 275-residue chain is Dermonecrotic toxin LamSicTox-alphaIV1ii (275 aa).

The active site involves H5. Mg(2+) is bound by residues E25 and D27. The active-site Nucleophile is the H41. Disulfide bonds link C45/C51 and C47/C192. D85 lines the Mg(2+) pocket.

It belongs to the arthropod phospholipase D family. Class II subfamily. Requires Mg(2+) as cofactor. As to expression, expressed by the venom gland.

It localises to the secreted. It carries out the reaction an N-(acyl)-sphingosylphosphocholine = an N-(acyl)-sphingosyl-1,3-cyclic phosphate + choline. The enzyme catalyses an N-(acyl)-sphingosylphosphoethanolamine = an N-(acyl)-sphingosyl-1,3-cyclic phosphate + ethanolamine. The catalysed reaction is a 1-acyl-sn-glycero-3-phosphocholine = a 1-acyl-sn-glycero-2,3-cyclic phosphate + choline. It catalyses the reaction a 1-acyl-sn-glycero-3-phosphoethanolamine = a 1-acyl-sn-glycero-2,3-cyclic phosphate + ethanolamine. Its function is as follows. Dermonecrotic toxins cleave the phosphodiester linkage between the phosphate and headgroup of certain phospholipids (sphingolipid and lysolipid substrates), forming an alcohol (often choline) and a cyclic phosphate. This toxin acts on sphingomyelin (SM). It may also act on ceramide phosphoethanolamine (CPE), lysophosphatidylcholine (LPC) and lysophosphatidylethanolamine (LPE), but not on lysophosphatidylserine (LPS), and lysophosphatidylglycerol (LPG). It acts by transphosphatidylation, releasing exclusively cyclic phosphate products as second products. Induces dermonecrosis, hemolysis, increased vascular permeability, edema, inflammatory response, and platelet aggregation. The chain is Dermonecrotic toxin LamSicTox-alphaIV1ii from Loxosceles amazonica (Recluse spider).